The primary structure comprises 518 residues: Membrane-bound lytic murein transglycosylase F (518 aa).

A signal peptide spans 1-21; that stretch reads MKKLKINYLFIGILALLLAVA. The tract at residues 22–269 is non-LT domain; it reads LWPSIPWFGK…RIEEKYLGHG (248 aa). The tract at residues 270-518 is LT domain; the sequence is DDFDYVDTRT…SRKGSEEKQN (249 aa). Glutamate 314 is an active-site residue.

This sequence in the N-terminal section; belongs to the bacterial solute-binding protein 3 family. The protein in the C-terminal section; belongs to the transglycosylase Slt family.

It localises to the cell outer membrane. It carries out the reaction Exolytic cleavage of the (1-&gt;4)-beta-glycosidic linkage between N-acetylmuramic acid (MurNAc) and N-acetylglucosamine (GlcNAc) residues in peptidoglycan, from either the reducing or the non-reducing ends of the peptidoglycan chains, with concomitant formation of a 1,6-anhydrobond in the MurNAc residue.. Murein-degrading enzyme that degrades murein glycan strands and insoluble, high-molecular weight murein sacculi, with the concomitant formation of a 1,6-anhydromuramoyl product. Lytic transglycosylases (LTs) play an integral role in the metabolism of the peptidoglycan (PG) sacculus. Their lytic action creates space within the PG sacculus to allow for its expansion as well as for the insertion of various structures such as secretion systems and flagella. This is Membrane-bound lytic murein transglycosylase F from Escherichia coli (strain ATCC 8739 / DSM 1576 / NBRC 3972 / NCIMB 8545 / WDCM 00012 / Crooks).